Reading from the N-terminus, the 159-residue chain is MNIQIITVGKLKEKYLVQGIAEYLKRLTAYAKVTIVEVPDEKAPEVLSDAEMKQVKDKEGVRILAKIPDDTHVIALAIDGKMKSSEEFAADLDKLATYGKSKVAFVIGGSLGLSESVLKRSDEQISFGRLTLPHQLMRLVLVEQVYRAFRIVRGEPYHK.

Residues Leu-76, Gly-108, and 127–132 (FGRLTL) contribute to the S-adenosyl-L-methionine site.

The protein belongs to the RNA methyltransferase RlmH family. Homodimer.

The protein localises to the cytoplasm. The catalysed reaction is pseudouridine(1915) in 23S rRNA + S-adenosyl-L-methionine = N(3)-methylpseudouridine(1915) in 23S rRNA + S-adenosyl-L-homocysteine + H(+). In terms of biological role, specifically methylates the pseudouridine at position 1915 (m3Psi1915) in 23S rRNA. In Listeria welshimeri serovar 6b (strain ATCC 35897 / DSM 20650 / CCUG 15529 / CIP 8149 / NCTC 11857 / SLCC 5334 / V8), this protein is Ribosomal RNA large subunit methyltransferase H.